The sequence spans 379 residues: Protein-glutamate methylesterase/protein-glutamine glutaminase (379 aa).

The Response regulatory domain occupies 4-121 (KILVVDDSIF…AANRQDAVAL (118 aa)). A 4-aspartylphosphate modification is found at D55. One can recognise a CheB-type methylesterase domain in the interval 186–379 (SGKKYRCLAI…FESHILKEMA (194 aa)). Residues S198, H225, and D323 contribute to the active site.

The protein belongs to the CheB family. Post-translationally, phosphorylated by CheA. Phosphorylation of the N-terminal regulatory domain activates the methylesterase activity.

The protein localises to the cytoplasm. The catalysed reaction is [protein]-L-glutamate 5-O-methyl ester + H2O = L-glutamyl-[protein] + methanol + H(+). It carries out the reaction L-glutaminyl-[protein] + H2O = L-glutamyl-[protein] + NH4(+). Involved in chemotaxis. Part of a chemotaxis signal transduction system that modulates chemotaxis in response to various stimuli. Catalyzes the demethylation of specific methylglutamate residues introduced into the chemoreceptors (methyl-accepting chemotaxis proteins or MCP) by CheR. Also mediates the irreversible deamidation of specific glutamine residues to glutamic acid. This Pseudoalteromonas atlantica (strain T6c / ATCC BAA-1087) protein is Protein-glutamate methylesterase/protein-glutamine glutaminase.